We begin with the raw amino-acid sequence, 137 residues long: NADH-quinone oxidoreductase subunit A (137 aa).

The next 3 membrane-spanning stretches (helical) occupy residues 12-32 (WAFAVFLLGVCGLIAFMLGVS), 68-88 (LVAMLFVIFDVEALFLFAWAV), and 94-114 (GWVGLVGATVFITILFAGLVY).

Belongs to the complex I subunit 3 family. In terms of assembly, NDH-1 is composed of 13 different subunits. Subunits NuoA, H, J, K, L, M, N constitute the membrane sector of the complex.

It localises to the cell inner membrane. The enzyme catalyses a quinone + NADH + 5 H(+)(in) = a quinol + NAD(+) + 4 H(+)(out). Its function is as follows. NDH-1 shuttles electrons from NADH, via FMN and iron-sulfur (Fe-S) centers, to quinones in the respiratory chain. The immediate electron acceptor for the enzyme in this species is believed to be ubiquinone. Couples the redox reaction to proton translocation (for every two electrons transferred, four hydrogen ions are translocated across the cytoplasmic membrane), and thus conserves the redox energy in a proton gradient. This Ectopseudomonas mendocina (strain ymp) (Pseudomonas mendocina) protein is NADH-quinone oxidoreductase subunit A.